The sequence spans 421 residues: MFIDNVSAIEVMDSRGNPTVKTTVELSDGTKESAIVPSGASTGKREALELRDGGSRYMGKGVLKAVENVNAQISDALIGLSPFNQAVIDATMKELDGTDNYGNLGANAVLGVSMAVARAAAKSLGIPLYRYLGGANAMVIPTPMLNIINGGSHADNSVDFQEYMIMPVGFEDFATSLQASAEVYHNLKAILKSKKHNTALGDEGGFAPDLSSNEEPIQIIMQAIEKAGYKAGEQMAIALDVAASELVSDGGYRLDSENRTVTSAELVDYYVDLCNKYPIVSIEDGLSEDDWDGWKLLTEKLGDRVQLVGDDLFVTNATILNEGIKKGIANSILIKPNQIGSVSETMQTVRLAQRNGYKCVMSHRSGESEDAFIADFAVALNCGEIKTGSTARGERTAKYNRLLEIENEVVYGEYLGSELFN.

Gln-161 serves as a coordination point for (2R)-2-phosphoglycerate. Glu-203 serves as the catalytic Proton donor. Mg(2+)-binding residues include Asp-240, Glu-283, and Asp-310. (2R)-2-phosphoglycerate contacts are provided by Lys-335, Arg-364, Ser-365, and Lys-386. The active-site Proton acceptor is the Lys-335.

Belongs to the enolase family. It depends on Mg(2+) as a cofactor.

It localises to the cytoplasm. Its subcellular location is the secreted. The protein resides in the cell surface. The catalysed reaction is (2R)-2-phosphoglycerate = phosphoenolpyruvate + H2O. It functions in the pathway carbohydrate degradation; glycolysis; pyruvate from D-glyceraldehyde 3-phosphate: step 4/5. Catalyzes the reversible conversion of 2-phosphoglycerate (2-PG) into phosphoenolpyruvate (PEP). It is essential for the degradation of carbohydrates via glycolysis. The sequence is that of Enolase from Sulfurimonas denitrificans (strain ATCC 33889 / DSM 1251) (Thiomicrospira denitrificans (strain ATCC 33889 / DSM 1251)).